Consider the following 369-residue polypeptide: Anhydro-N-acetylmuramic acid kinase (369 aa).

ATP is bound at residue 12-19 (GTSMDGVD).

This sequence belongs to the anhydro-N-acetylmuramic acid kinase family.

It catalyses the reaction 1,6-anhydro-N-acetyl-beta-muramate + ATP + H2O = N-acetyl-D-muramate 6-phosphate + ADP + H(+). It participates in amino-sugar metabolism; 1,6-anhydro-N-acetylmuramate degradation. Its pathway is cell wall biogenesis; peptidoglycan recycling. Functionally, catalyzes the specific phosphorylation of 1,6-anhydro-N-acetylmuramic acid (anhMurNAc) with the simultaneous cleavage of the 1,6-anhydro ring, generating MurNAc-6-P. Is required for the utilization of anhMurNAc either imported from the medium or derived from its own cell wall murein, and thus plays a role in cell wall recycling. This Shewanella baltica (strain OS185) protein is Anhydro-N-acetylmuramic acid kinase.